A 112-amino-acid polypeptide reads, in one-letter code: Class I hydrophobin 7 (112 aa).

The signal sequence occupies residues 1–23 (MFARQATSVSAFLVLTLSLFAAA). 4 cysteine pairs are disulfide-bonded: C36/C93, C43/C87, C44/C74, and C94/C107. N-linked (GlcNAc...) asparagine glycosylation is present at N96.

This sequence belongs to the fungal hydrophobin family. As to quaternary structure, self-assembles to form functional amyloid fibrils called rodlets. Self-assembly into fibrillar rodlets occurs spontaneously at hydrophobic:hydrophilic interfaces and the rodlets further associate laterally to form amphipathic monolayers.

It localises to the secreted. It is found in the cell wall. In terms of biological role, aerial growth, conidiation, and dispersal of filamentous fungi in the environment rely upon a capability of their secreting small amphipathic proteins called hydrophobins (HPBs) with low sequence identity. Class I can self-assemble into an outermost layer of rodlet bundles on aerial cell surfaces, conferring cellular hydrophobicity that supports fungal growth, development and dispersal; whereas Class II form highly ordered films at water-air interfaces through intermolecular interactions but contribute nothing to the rodlet structure. The sequence is that of Class I hydrophobin 7 from Flammulina velutipes (Agaricus velutipes).